The primary structure comprises 226 residues: Lipoprotein-releasing system ATP-binding protein LolD (226 aa).

Residues isoleucine 6–leucine 226 form the ABC transporter domain. ATP is bound at residue alanine 42 to serine 49.

It belongs to the ABC transporter superfamily. Lipoprotein translocase (TC 3.A.1.125) family. As to quaternary structure, the complex is composed of two ATP-binding proteins (LolD) and two transmembrane proteins (LolC and LolE).

Its subcellular location is the cell inner membrane. Its function is as follows. Part of the ABC transporter complex LolCDE involved in the translocation of mature outer membrane-directed lipoproteins, from the inner membrane to the periplasmic chaperone, LolA. Responsible for the formation of the LolA-lipoprotein complex in an ATP-dependent manner. The sequence is that of Lipoprotein-releasing system ATP-binding protein LolD from Mesorhizobium japonicum (strain LMG 29417 / CECT 9101 / MAFF 303099) (Mesorhizobium loti (strain MAFF 303099)).